Consider the following 455-residue polypeptide: GTPase Der (455 aa).

2 consecutive EngA-type G domains span residues 4–169 and 178–353; these read PVVA…PPKD and IQLS…EQHR. GTP is bound by residues 10–17, 57–61, 120–123, 184–191, 231–235, and 296–299; these read GRPNVGKS, DTGGL, NKCE, DTAGI, and NKWD. The KH-like domain occupies 354 to 439; that stretch reads RRVSTSVVNE…PVKLFWRGKQ (86 aa).

This sequence belongs to the TRAFAC class TrmE-Era-EngA-EngB-Septin-like GTPase superfamily. EngA (Der) GTPase family. As to quaternary structure, associates with the 50S ribosomal subunit.

Its function is as follows. GTPase that plays an essential role in the late steps of ribosome biogenesis. This is GTPase Der from Synechococcus sp. (strain CC9311).